The following is a 221-amino-acid chain: Molybdenum cofactor guanylyltransferase (221 aa).

Residues 18-20, lysine 35, asparagine 63, aspartate 81, and aspartate 112 contribute to the GTP site; that span reads IAG. Residue aspartate 112 coordinates Mg(2+).

The protein belongs to the MobA family. As to quaternary structure, monomer. It depends on Mg(2+) as a cofactor.

The protein resides in the cytoplasm. It carries out the reaction Mo-molybdopterin + GTP + H(+) = Mo-molybdopterin guanine dinucleotide + diphosphate. In terms of biological role, transfers a GMP moiety from GTP to Mo-molybdopterin (Mo-MPT) cofactor (Moco or molybdenum cofactor) to form Mo-molybdopterin guanine dinucleotide (Mo-MGD) cofactor. The polypeptide is Molybdenum cofactor guanylyltransferase (Brucella abortus (strain S19)).